A 240-amino-acid polypeptide reads, in one-letter code: Ribonuclease HII (240 aa).

An RNase H type-2 domain is found at 31 to 222; it reads RLIAGVDEAG…VRRALGLETA (192 aa). Residues Asp37, Glu38, and Asp130 each coordinate a divalent metal cation.

The protein belongs to the RNase HII family. The cofactor is Mn(2+). Requires Mg(2+) as cofactor.

Its subcellular location is the cytoplasm. The enzyme catalyses Endonucleolytic cleavage to 5'-phosphomonoester.. Its function is as follows. Endonuclease that specifically degrades the RNA of RNA-DNA hybrids. The chain is Ribonuclease HII from Xanthomonas campestris pv. campestris (strain 8004).